The primary structure comprises 257 residues: Homeobox protein goosecoid (257 aa).

The homeobox DNA-binding region spans 160 to 219; the sequence is KRRHRTIFTDEQLEALENLFQETKYPDVGTREQLARKVHLREEKVEVWFKNRRAKWRRQK. The disordered stretch occupies residues 213–257; the sequence is AKWRRQKRSSSEESENAEKWNKTSSSKASPEKREEEGKSDLDSDS. The span at 241–257 shows a compositional bias: basic and acidic residues; it reads SPEKREEEGKSDLDSDS.

Belongs to the paired homeobox family. Bicoid subfamily.

It is found in the nucleus. Regulates chordin (CHRD). May play a role in spatial programing within discrete embryonic fields or lineage compartments during organogenesis. In concert with NKX3-2, plays a role in defining the structural components of the middle ear; required for the development of the entire tympanic ring. Probably involved in the regulatory networks that define neural crest cell fate specification and determine mesoderm cell lineages in mammals. This Homo sapiens (Human) protein is Homeobox protein goosecoid (GSC).